A 333-amino-acid chain; its full sequence is MPTSTWNRHHVLSLADFTAAEYDIVLKTAASFQEVLSRRTKKVPALQGQVVANLFFEPSTRTRSSFELAAKRLSADTLNFAASTSSMTKGETILDTAKTYLAMGTDIMVIRHKEAGVPNAIAQEMDRLGVRVSVLNAGDGQHEHPSQGLLDLFTICSLVDPANPRLELLQGKKIAIVGDILHSRVARSNIWSLIASGAQVHLAAPPTLLPKLFAEYIFGEETAPPGQLFIHWQLEPALQDADFVMTLRLQKERMTAHLLPSLREYHQLFGITRAKLQLCQPNVKVLHPGPVNRGVEISSDLMDDPEFSLIQSQVTSGVAVRMALLYLIGSGKT.

Residues R61 and T62 each coordinate carbamoyl phosphate. K89 is a binding site for L-aspartate. Residues R111, H144, and Q147 each coordinate carbamoyl phosphate. Residues R184 and R248 each contribute to the L-aspartate site. Positions 289 and 290 each coordinate carbamoyl phosphate.

This sequence belongs to the aspartate/ornithine carbamoyltransferase superfamily. ATCase family. Heterododecamer (2C3:3R2) of six catalytic PyrB chains organized as two trimers (C3), and six regulatory PyrI chains organized as three dimers (R2).

It carries out the reaction carbamoyl phosphate + L-aspartate = N-carbamoyl-L-aspartate + phosphate + H(+). The protein operates within pyrimidine metabolism; UMP biosynthesis via de novo pathway; (S)-dihydroorotate from bicarbonate: step 2/3. Its function is as follows. Catalyzes the condensation of carbamoyl phosphate and aspartate to form carbamoyl aspartate and inorganic phosphate, the committed step in the de novo pyrimidine nucleotide biosynthesis pathway. The protein is Aspartate carbamoyltransferase catalytic subunit of Trichormus variabilis (strain ATCC 29413 / PCC 7937) (Anabaena variabilis).